The chain runs to 393 residues: tRNA-specific 2-thiouridylase MnmA (393 aa).

ATP contacts are provided by residues 19–26 and Leu45; that span reads AMSGGVDS. Cys113 serves as the catalytic Nucleophile. A disulfide bridge links Cys113 with Cys210. Gly137 lines the ATP pocket. Residues 160 to 162 are interaction with tRNA; that stretch reads RDQ. The active-site Cysteine persulfide intermediate is Cys210.

This sequence belongs to the MnmA/TRMU family.

Its subcellular location is the cytoplasm. It catalyses the reaction S-sulfanyl-L-cysteinyl-[protein] + uridine(34) in tRNA + AH2 + ATP = 2-thiouridine(34) in tRNA + L-cysteinyl-[protein] + A + AMP + diphosphate + H(+). Functionally, catalyzes the 2-thiolation of uridine at the wobble position (U34) of tRNA, leading to the formation of s(2)U34. The protein is tRNA-specific 2-thiouridylase MnmA of Bradyrhizobium diazoefficiens (strain JCM 10833 / BCRC 13528 / IAM 13628 / NBRC 14792 / USDA 110).